The primary structure comprises 171 residues: Protein GrpE (171 aa).

The interval 1-22 (MNHEHPDIESQQSAADAAAAAG) is disordered.

It belongs to the GrpE family. Homodimer.

The protein localises to the cytoplasm. Its function is as follows. Participates actively in the response to hyperosmotic and heat shock by preventing the aggregation of stress-denatured proteins, in association with DnaK and GrpE. It is the nucleotide exchange factor for DnaK and may function as a thermosensor. Unfolded proteins bind initially to DnaJ; upon interaction with the DnaJ-bound protein, DnaK hydrolyzes its bound ATP, resulting in the formation of a stable complex. GrpE releases ADP from DnaK; ATP binding to DnaK triggers the release of the substrate protein, thus completing the reaction cycle. Several rounds of ATP-dependent interactions between DnaJ, DnaK and GrpE are required for fully efficient folding. The protein is Protein GrpE of Stenotrophomonas maltophilia (strain R551-3).